The chain runs to 156 residues: Snaclec A4 (156 aa).

A signal peptide spans 1 to 23 (MGRSISVSFGLLVVFLSLSGTGA). Cysteines 27 and 38 form a disulfide. The C-type lectin domain occupies 34–155 (HEGHCYKVFN…CGQPYRFTCE (122 aa)). N-linked (GlcNAc...) asparagine glycosylation occurs at Asn-45. 2 cysteine pairs are disulfide-bonded: Cys-55/Cys-154 and Cys-129/Cys-146.

The protein belongs to the snaclec family. In terms of assembly, heterodimer; disulfide-linked. In terms of tissue distribution, expressed by the venom gland.

It is found in the secreted. Its function is as follows. Interferes with one step of hemostasis (modulation of platelet aggregation, or coagulation cascade, for example). In Macrovipera lebetinus (Levantine viper), this protein is Snaclec A4.